Here is a 129-residue protein sequence, read N- to C-terminus: Transcriptional activator protein (129 aa).

The short motif at 13-28 (KAQHRAAKRRAIRRRR) is the Nuclear localization signal element. A zinc finger lies at 33–50 (CGCSIYIHIDCRNNGFTH). The tract at residues 73–118 (LFQDNQRRGSPLHQHQDIPLTNQVQPQPEESIGSPQGISQLPSMDD) is disordered. Positions 91–114 (PLTNQVQPQPEESIGSPQGISQLP) are enriched in polar residues. The interval 115-129 (SMDDIDDSFWENLFK) is transactivation.

This sequence belongs to the geminiviridae transcriptional activator protein family. Monomer. Homodimer. Homooligomer. Self-interaction correlates with nuclear localization and efficient activation of transcription. Monomers suppress local silencing by interacting with and inactivating host adenosine kinase (ADK) in the cytoplasm. Interacts with and inhibits host SNF1 kinase. Binds to ssDNA. Post-translationally, phosphorylated.

It is found in the host nucleus. Its subcellular location is the host cytoplasm. Its function is as follows. Strong activator of the late viral genes promoters. Enhances the expression of the capsid protein and nuclear shuttle protein. Acts as a suppressor of RNA-mediated gene silencing, also known as post-transcriptional gene silencing (PTGS), a mechanism of plant viral defense that limits the accumulation of viral RNAs. Suppresses the host RNA silencing by inhibiting adenosine kinase (ADK), a kinase involved in a general methylation pathway. Also suppresses the host basal defense by interacting with and inhibiting SNF1 kinase, a key regulator of cell metabolism implicated in innate antiviral defense. Determines pathogenicity. The chain is Transcriptional activator protein from Tomato golden mosaic virus (strain Yellow vein) (TGMV).